The primary structure comprises 300 residues: Light-independent protochlorophyllide reductase iron-sulfur ATP-binding protein (300 aa).

ATP contacts are provided by residues 43-48 and lysine 72; that span reads GIGKST. Serine 47 provides a ligand contact to Mg(2+). [4Fe-4S] cluster-binding residues include cysteine 128 and cysteine 162. 213-214 contributes to the ATP binding site; it reads NR.

Belongs to the NifH/BchL/ChlL family. Homodimer. Protochlorophyllide reductase is composed of three subunits; ChlL, ChlN and ChlB. It depends on [4Fe-4S] cluster as a cofactor.

It carries out the reaction chlorophyllide a + oxidized 2[4Fe-4S]-[ferredoxin] + 2 ADP + 2 phosphate = protochlorophyllide a + reduced 2[4Fe-4S]-[ferredoxin] + 2 ATP + 2 H2O. Its pathway is porphyrin-containing compound metabolism; chlorophyll biosynthesis (light-independent). Its function is as follows. Component of the dark-operative protochlorophyllide reductase (DPOR) that uses Mg-ATP and reduced ferredoxin to reduce ring D of protochlorophyllide (Pchlide) to form chlorophyllide a (Chlide). This reaction is light-independent. The L component serves as a unique electron donor to the NB-component of the complex, and binds Mg-ATP. The chain is Light-independent protochlorophyllide reductase iron-sulfur ATP-binding protein from Synechococcus sp. (strain RCC307).